Here is a 380-residue protein sequence, read N- to C-terminus: Queuine tRNA-ribosyltransferase (380 aa).

Catalysis depends on Asp96, which acts as the Proton acceptor. Substrate contacts are provided by residues 96-100, Asp150, Gln193, and Gly220; that span reads DSGGF. The RNA binding stretch occupies residues 251-257; it reads GVGAPDS. The Nucleophile role is filled by Asp270. Positions 275-279 are RNA binding; important for wobble base 34 recognition; that stretch reads TRIAR. 4 residues coordinate Zn(2+): Cys308, Cys310, Cys313, and His339.

It belongs to the queuine tRNA-ribosyltransferase family. As to quaternary structure, homodimer. Within each dimer, one monomer is responsible for RNA recognition and catalysis, while the other monomer binds to the replacement base PreQ1. Zn(2+) serves as cofactor.

It catalyses the reaction 7-aminomethyl-7-carbaguanine + guanosine(34) in tRNA = 7-aminomethyl-7-carbaguanosine(34) in tRNA + guanine. Its pathway is tRNA modification; tRNA-queuosine biosynthesis. Catalyzes the base-exchange of a guanine (G) residue with the queuine precursor 7-aminomethyl-7-deazaguanine (PreQ1) at position 34 (anticodon wobble position) in tRNAs with GU(N) anticodons (tRNA-Asp, -Asn, -His and -Tyr). Catalysis occurs through a double-displacement mechanism. The nucleophile active site attacks the C1' of nucleotide 34 to detach the guanine base from the RNA, forming a covalent enzyme-RNA intermediate. The proton acceptor active site deprotonates the incoming PreQ1, allowing a nucleophilic attack on the C1' of the ribose to form the product. After dissociation, two additional enzymatic reactions on the tRNA convert PreQ1 to queuine (Q), resulting in the hypermodified nucleoside queuosine (7-(((4,5-cis-dihydroxy-2-cyclopenten-1-yl)amino)methyl)-7-deazaguanosine). This Streptococcus thermophilus (strain CNRZ 1066) protein is Queuine tRNA-ribosyltransferase.